We begin with the raw amino-acid sequence, 232 residues long: Expansin-YoaJ (232 aa).

An N-terminal signal peptide occupies residues 1–25 (MKKIMSAFVGMVLLTIFCFSPQASA). The region spanning 58 to 127 (ITAINPADLN…MKDGKINIKW (70 aa)) is the Expansin-like EG45 domain.

It localises to the secreted. Its subcellular location is the cell wall. In terms of biological role, may promote colonization of plant roots. May cause loosening and extension of plant cell walls by disrupting non-covalent bonding between cellulose microfibrils and matrix glucans. Has very low expansin activity (in vitro). No enzymatic activity has been found. Binds to peptidoglycan and to plant cell walls. This is Expansin-YoaJ (yoaJ) from Bacillus subtilis (strain 168).